The primary structure comprises 495 residues: Glutamyl-tRNA(Gln) amidotransferase subunit A (495 aa).

Catalysis depends on charge relay system residues lysine 79 and serine 159. Catalysis depends on serine 183, which acts as the Acyl-ester intermediate.

Belongs to the amidase family. GatA subfamily. As to quaternary structure, heterotrimer of A, B and C subunits.

The catalysed reaction is L-glutamyl-tRNA(Gln) + L-glutamine + ATP + H2O = L-glutaminyl-tRNA(Gln) + L-glutamate + ADP + phosphate + H(+). In terms of biological role, allows the formation of correctly charged Gln-tRNA(Gln) through the transamidation of misacylated Glu-tRNA(Gln) in organisms which lack glutaminyl-tRNA synthetase. The reaction takes place in the presence of glutamine and ATP through an activated gamma-phospho-Glu-tRNA(Gln). This is Glutamyl-tRNA(Gln) amidotransferase subunit A from Gluconobacter oxydans (strain 621H) (Gluconobacter suboxydans).